Consider the following 267-residue polypeptide: DNA repair protein RecO (267 aa).

This sequence belongs to the RecO family.

In terms of biological role, involved in DNA repair and RecF pathway recombination. The polypeptide is DNA repair protein RecO (Mesoplasma florum (strain ATCC 33453 / NBRC 100688 / NCTC 11704 / L1) (Acholeplasma florum)).